Reading from the N-terminus, the 260-residue chain is Carbonic anhydrase 2 (260 aa).

An N-acetylserine modification is found at Ser-2. Phosphoserine is present on Ser-2. The Alpha-carbonic anhydrase domain maps to 3–259 (HHWGYSKSNG…LKNRKIKASF (257 aa)). Positions 16–39 (WHKEFPIANGDRQSPVDIDTGTAQ) are disordered. Residue His-64 is the Proton donor/acceptor of the active site. Phosphoserine is present on Ser-87. Residues His-94, His-96, and His-119 each coordinate Zn(2+). Residue Ser-165 is modified to Phosphoserine. A substrate-binding site is contributed by 198–199 (TT). Ser-232 carries the phosphoserine modification.

It belongs to the alpha-carbonic anhydrase family. In terms of assembly, interacts with SLC4A4 and SLC26A6. Interaction with SLC4A7 regulates SLC4A7 transporter activity. Zn(2+) is required as a cofactor.

It is found in the cytoplasm. It localises to the cell membrane. It carries out the reaction hydrogencarbonate + H(+) = CO2 + H2O. The enzyme catalyses urea = cyanamide + H2O. With respect to regulation, inhibited by acetazolamide. Catalyzes the reversible hydration of carbon dioxide. Can also hydrate cyanamide to urea. Involved in the regulation of fluid secretion into the anterior chamber of the eye. Essential for bone resorption and osteoclast differentiation. Contributes to intracellular pH regulation in the duodenal upper villous epithelium during proton-coupled peptide absorption. Stimulates the chloride-bicarbonate exchange activity of SLC26A6. This is Carbonic anhydrase 2 (Ca2) from Rattus norvegicus (Rat).